A 156-amino-acid chain; its full sequence is MPRRREVAKRIILPDPKYGDRVVAKLVNIIMFDGKKSTAERALYGALEIVSEKVNEEPVKILKKSLDNIKPMLEVKSRRVGGSTYQVPVEVRAERRVSLAMRWLVKYANDRSEKTVTDKLAGEILDAYNNRGAAVKKREDTHKMAEANRAFAHYRW.

It belongs to the universal ribosomal protein uS7 family. Part of the 30S ribosomal subunit. Contacts proteins S9 and S11.

In terms of biological role, one of the primary rRNA binding proteins, it binds directly to 16S rRNA where it nucleates assembly of the head domain of the 30S subunit. Is located at the subunit interface close to the decoding center, probably blocks exit of the E-site tRNA. This chain is Small ribosomal subunit protein uS7, found in Geotalea daltonii (strain DSM 22248 / JCM 15807 / FRC-32) (Geobacter daltonii).